Here is a 404-residue protein sequence, read N- to C-terminus: Tryptophan synthase beta chain (404 aa).

Lysine 90 bears the N6-(pyridoxal phosphate)lysine mark.

This sequence belongs to the TrpB family. In terms of assembly, tetramer of two alpha and two beta chains. Pyridoxal 5'-phosphate serves as cofactor.

It carries out the reaction (1S,2R)-1-C-(indol-3-yl)glycerol 3-phosphate + L-serine = D-glyceraldehyde 3-phosphate + L-tryptophan + H2O. It functions in the pathway amino-acid biosynthesis; L-tryptophan biosynthesis; L-tryptophan from chorismate: step 5/5. Its function is as follows. The beta subunit is responsible for the synthesis of L-tryptophan from indole and L-serine. The chain is Tryptophan synthase beta chain (trpB) from Geobacillus stearothermophilus (Bacillus stearothermophilus).